A 177-amino-acid polypeptide reads, in one-letter code: ATP-dependent protease subunit HslV (177 aa).

Thr6 is a catalytic residue. Na(+) contacts are provided by Ser162, Cys165, and Thr168.

The protein belongs to the peptidase T1B family. HslV subfamily. A double ring-shaped homohexamer of HslV is capped on each side by a ring-shaped HslU homohexamer. The assembly of the HslU/HslV complex is dependent on binding of ATP.

The protein resides in the cytoplasm. The enzyme catalyses ATP-dependent cleavage of peptide bonds with broad specificity.. Allosterically activated by HslU binding. Protease subunit of a proteasome-like degradation complex believed to be a general protein degrading machinery. The sequence is that of ATP-dependent protease subunit HslV from Desulforudis audaxviator (strain MP104C).